A 338-amino-acid polypeptide reads, in one-letter code: Delta(9)-fatty-acid desaturase fat-7 (338 aa).

A run of 4 helical transmembrane segments spans residues 51–71 (VALFAALHVAAAIGLYELVFH), 76–96 (TAVFSFALYVFSGFGITAGAH), 194–214 (YFPLVILFCFILPTIIPVYFW), and 218–238 (AFIAFYVAGTFRYCFTLHATW).

The protein belongs to the fatty acid desaturase type 1 family. Expressed in the intestine in adult worms and in all four larval stages.

It localises to the membrane. It catalyses the reaction octadecanoyl-CoA + 2 Fe(II)-[cytochrome b5] + O2 + 2 H(+) = (9Z)-octadecenoyl-CoA + 2 Fe(III)-[cytochrome b5] + 2 H2O. The catalysed reaction is hexadecanoyl-CoA + 2 Fe(II)-[cytochrome b5] + O2 + 2 H(+) = (9Z)-hexadecenoyl-CoA + 2 Fe(III)-[cytochrome b5] + 2 H2O. The enzyme catalyses heptadecanoyl-CoA + 2 Fe(II)-[cytochrome b5] + O2 + 2 H(+) = (9Z)-heptadecenoyl-CoA + 2 Fe(III)-[cytochrome b5] + 2 H2O. It carries out the reaction (11E)-octadecenoyl-CoA + 2 Fe(II)-[cytochrome b5] + O2 + 2 H(+) = (9Z,11E)-octadecadienoyl-CoA + 2 Fe(III)-[cytochrome b5] + 2 H2O. It participates in lipid metabolism; monounsaturated fatty acid biosynthesis. The protein operates within lipid metabolism; fatty acid metabolism. Functionally, delta(9)-fatty acid desaturase that acts preferentially on stearoyl-CoA (octadecanoyl-CoA) producing the monounsaturated oleoyl-CoA ((9Z)-octadecenoyl-CoA), one of the most abundant monounsaturated fatty acid in Caenorhabditis elegans phospholipids and triacylglycerols. Also acts on palmitoyl-CoA (hexadecanoyl-CoA), heptadecanoyl-CoA and (11E)-octadecenoyl-CoA (trans-vaccenoyl-CoA), the monounsaturated fatty acids (MUFAs) produced are further used by several other desaturases and elongases as substrates to synthesize polyunsaturated fatty acids (PUFAs) endogenously (PUFAs are essential for membrane structure and many cellular and physiological processes). Unlike plants, Caenorhabditis elegans desaturases seem to use fatty acyl-CoAs as substrates. Partially inhibits expression of genes involved in beta-oxidation, such as ech-1 and acs-2, perhaps signaling via the actions of one of its fatty acid products. May form part of a negative feedback loop with the transcription factor nhr-49 to limit beta-oxidation, in which nhr-49 stimulates expression of fat-7 and acs-2, and in turn fat-7 indirectly inhibits acs-2 and other genes also involved in beta-oxidation. The protein is Delta(9)-fatty-acid desaturase fat-7 (fat-7) of Caenorhabditis elegans.